The following is a 619-amino-acid chain: N-acetylmuramoyl-L-alanine amidase domain-containing protein SAOUHSC_02979 (619 aa).

Residues 1 to 27 (MPKNKILIYLLSTTLVLPTLVSPTAYA) form the signal peptide. Disordered regions lie at residues 25–83 (AYAD…TIDD), 134–226 (SDYE…SMSD), and 238–290 (EDAK…NQKD). 3 stretches are compositionally biased toward basic and acidic residues: residues 30–65 (PQKD…KADK), 73–82 (NNDKKFKTID), and 137–146 (EQPRNGEKST). Low complexity predominate over residues 147 to 156 (NDSNKNSDNS). Over residues 157-175 (IKNDTDTQSSKQDKADNQK) the composition is skewed to basic and acidic residues. The span at 176–192 (APKSNNTKPSTSNKQPN) shows a compositional bias: polar residues. Over residues 214 to 226 (QKSSSKDNQSMSD) the composition is skewed to low complexity. Positions 238–260 (EDAKKTQKDYASQSKKDKNEKSN) are enriched in basic and acidic residues. An N-acetylmuramoyl-L-alanine amidase region spans residues 327 to 468 (IAKDAHRIGQ…LNSIIKHYQL (142 aa)). The Peptidase C51 domain occupies 488–617 (DYDDSSDEFK…AAAEELSYIT (130 aa)).

It in the N-terminal section; belongs to the N-acetylmuramoyl-L-alanine amidase 2 family.

The protein localises to the secreted. This is N-acetylmuramoyl-L-alanine amidase domain-containing protein SAOUHSC_02979 from Staphylococcus aureus (strain NCTC 8325 / PS 47).